The following is a 207-amino-acid chain: Peptidyl-tRNA hydrolase (207 aa).

TRNA is bound at residue Tyr-14. Catalysis depends on His-19, which acts as the Proton acceptor. TRNA-binding residues include Tyr-64, Asn-66, and Asn-112.

Belongs to the PTH family. As to quaternary structure, monomer.

The protein resides in the cytoplasm. The catalysed reaction is an N-acyl-L-alpha-aminoacyl-tRNA + H2O = an N-acyl-L-amino acid + a tRNA + H(+). In terms of biological role, hydrolyzes ribosome-free peptidyl-tRNAs (with 1 or more amino acids incorporated), which drop off the ribosome during protein synthesis, or as a result of ribosome stalling. Catalyzes the release of premature peptidyl moieties from peptidyl-tRNA molecules trapped in stalled 50S ribosomal subunits, and thus maintains levels of free tRNAs and 50S ribosomes. The protein is Peptidyl-tRNA hydrolase of Rhodopseudomonas palustris (strain HaA2).